A 1070-amino-acid chain; its full sequence is MCFSFIMPPAMADILDIWAVDSQIASDGSIPVDFLLPTGIYIQLEVPREATISYIKQMLWKQVHNYPMFNLLMDIDSYMFACVNQTAVYEELEDETRRLCDVRPFLPVLKLVTRSCDPGEKLDSKIGVLIGKGLHEFDSLKDPEVNEFRRKMRKFSEEKILSLVGLSWMDWLKQTYPPEHEPSIPENLEDKLYGGKLIVAVHFENCQDVFSFQVSPNMNPIKVNELAIQKRLTIHGKEDEVSPYDYVLQVSGRVEYVFGDHPLIQFQYIRNCVMNRALPHFILVECCKIKKMYEQEMIAIEAAINRNSSNLPLPLPPKKTRIISHVWENNNPFQIVLVKGNKLNTEETVKVHVRAGLFHGTELLCKTIVSSEVSGKNDHIWNEPLEFDINICDLPRMARLCFAVYAVLDKVKTKKSTKTINPSKYQTIRKAGKVHYPVAWVNTMVFDFKGQLRTGDIILHSWSSFPDELEEMLNPMGTVQTNPYTENATALHVKFPENKKQPYYYPPFDKIIEKAAEIASSDSANVSSRGGKKFLPVLKEILDRDPLSQLCENEMDLIWTLRQDCREIFPQSLPKLLLSIKWNKLEDVAQLQALLQIWPKLPPREALELLDFNYPDQYVREYAVGCLRQMSDEELSQYLLQLVQVLKYEPFLDCALSRFLLERALGNRRIGQFLFWHLRSEVHIPAVSVQFGVILEAYCRGSVGHMKVLSKQVEALNKLKTLNSLIKLNAVKLNRAKGKEAMHTCLKQSAYREALSDLQSPLNPCVILSELYVEKCKYMDSKMKPLWLVYNNKVFGEDSVGVIFKNGDDLRQDMLTLQMLRLMDLLWKEAGLDLRMLPYGCLATGDRSGLIEVVSTSETIADIQLNSSNVAAAAAFNKDALLNWLKEYNSGDDLDRAIEEFTLSCAGYCVASYVLGIGDRHSDNIMVKKTGQLFHIDFGHILGNFKSKFGIKRERVPFILTYDFIHVIQQGKTGNTEKFGRFRQCCEDAYLILRRHGNLFITLFALMLTAGLPELTSVKDIQYLKDSLALGKSEEEALKQFKQKFDEALRESWTTKVNWMAHTVRKDYRS.

In terms of domain architecture, PI3K-ABD spans 26-115 (SDGSIPVDFL…LPVLKLVTRS (90 aa)). A PI3K-RBD domain is found at 194–285 (GGKLIVAVHF…RALPHFILVE (92 aa)). Serine 324 bears the Phosphoserine mark. Residues 327-496 (WENNNPFQIV…NATALHVKFP (170 aa)) enclose the C2 PI3K-type domain. The Nuclear localization signal signature appears at 410–418 (KVKTKKSTK). One can recognise a PIK helical domain in the interval 524-701 (ANVSSRGGKK…GVILEAYCRG (178 aa)). Residues 772–1053 (YVEKCKYMDS…KFDEALRESW (282 aa)) form the PI3K/PI4K catalytic domain. A G-loop region spans residues 778 to 784 (YMDSKMK). A catalytic loop region spans residues 916 to 924 (GIGDRHSDN). Residues 935-961 (HIDFGHILGNFKSKFGIKRERVPFILT) form an activation loop region. Position 1070 is a phosphoserine; by autocatalysis (serine 1070).

Belongs to the PI3/PI4-kinase family. In terms of assembly, heterodimer of a catalytic subunit PIK3CB and a p85 regulatory subunit (PIK3R1, PIK3R2 or PIK3R3). Interaction with PIK3R2 is required for nuclear localization and nuclear export. Part of a complex with PIK3R1 and PTEN. Binding to PTEN may antagonize the lipid kinase activity under normal growth conditions. Part of a complex involved in autophagosome formation composed of PIK3C3 and PIK3R4. Interacts with BECN1, ATG14 and RAB5A. Autophosphorylation at Ser-1070 negatively regulates the phosphatidylinositol-4,5-bisphosphate 3-kinase activity. Expressed ubiquitously.

The protein localises to the cytoplasm. Its subcellular location is the nucleus. It carries out the reaction a 1,2-diacyl-sn-glycero-3-phospho-(1D-myo-inositol-4,5-bisphosphate) + ATP = a 1,2-diacyl-sn-glycero-3-phospho-(1D-myo-inositol-3,4,5-trisphosphate) + ADP + H(+). The catalysed reaction is 1-octadecanoyl-2-(5Z,8Z,11Z,14Z)-eicosatetraenoyl-sn-glycero-3-phospho-1D-myo-inositol 4,5-bisphosphate + ATP = 1-octadecanoyl-2-(5Z,8Z,11Z,14Z-eicosatetraenoyl)-sn-glycero-3-phospho-(1D-myo-inositol 3,4,5-triphosphate) + ADP + H(+). It catalyses the reaction L-seryl-[protein] + ATP = O-phospho-L-seryl-[protein] + ADP + H(+). The protein operates within phospholipid metabolism; phosphatidylinositol phosphate biosynthesis. In terms of biological role, phosphoinositide-3-kinase (PI3K) phosphorylates phosphatidylinositol derivatives at position 3 of the inositol ring to produce 3-phosphoinositides. Uses ATP and PtdIns(4,5)P2 (phosphatidylinositol 4,5-bisphosphate) to generate phosphatidylinositol 3,4,5-trisphosphate (PIP3). PIP3 plays a key role by recruiting PH domain-containing proteins to the membrane, including AKT1 and PDPK1, activating signaling cascades involved in cell growth, survival, proliferation, motility and morphology. Involved in the activation of AKT1 upon stimulation by G-protein coupled receptors (GPCRs) ligands such as CXCL12, sphingosine 1-phosphate, and lysophosphatidic acid. May also act downstream receptor tyrosine kinases. Required in different signaling pathways for stable platelet adhesion and aggregation. Plays a role in platelet activation signaling triggered by GPCRs, alpha-IIb/beta-3 integrins (ITGA2B/ ITGB3) and ITAM (immunoreceptor tyrosine-based activation motif)-bearing receptors such as GP6. Regulates the strength of adhesion of ITGA2B/ ITGB3 activated receptors necessary for the cellular transmission of contractile forces. Required for platelet aggregation induced by F2 (thrombin) and thromboxane A2 (TXA2). Has a role in cell survival. May have a role in cell migration. Involved in the early stage of autophagosome formation. Modulates the intracellular level of PtdIns3P (phosphatidylinositol 3-phosphate) and activates PIK3C3 kinase activity. May act as a scaffold, independently of its lipid kinase activity to positively regulate autophagy. May have a role in insulin signaling as scaffolding protein in which the lipid kinase activity is not required. May have a kinase-independent function in regulating cell proliferation and in clathrin-mediated endocytosis. Mediator of oncogenic signal in cell lines lacking PTEN. The lipid kinase activity is necessary for its role in oncogenic transformation. Required for the growth of ERBB2 and RAS driven tumors. Also has a protein kinase activity showing autophosphorylation. The protein is Phosphatidylinositol 4,5-bisphosphate 3-kinase catalytic subunit beta isoform (PIK3CB) of Homo sapiens (Human).